Reading from the N-terminus, the 319-residue chain is 4-hydroxy-3-methylbut-2-enyl diphosphate reductase (319 aa).

Residue Cys-17 coordinates [4Fe-4S] cluster. Positions 46 and 79 each coordinate (2E)-4-hydroxy-3-methylbut-2-enyl diphosphate. Residues His-46 and His-79 each contribute to the dimethylallyl diphosphate site. His-46 and His-79 together coordinate isopentenyl diphosphate. Cys-101 is a [4Fe-4S] cluster binding site. A (2E)-4-hydroxy-3-methylbut-2-enyl diphosphate-binding site is contributed by His-129. His-129 is a dimethylallyl diphosphate binding site. An isopentenyl diphosphate-binding site is contributed by His-129. The active-site Proton donor is Glu-131. Thr-170 contributes to the (2E)-4-hydroxy-3-methylbut-2-enyl diphosphate binding site. Cys-200 contributes to the [4Fe-4S] cluster binding site. (2E)-4-hydroxy-3-methylbut-2-enyl diphosphate is bound by residues Ser-228, Ser-229, Asn-230, and Ser-273. Dimethylallyl diphosphate is bound by residues Ser-228, Ser-229, Asn-230, and Ser-273. The isopentenyl diphosphate site is built by Ser-228, Ser-229, Asn-230, and Ser-273.

It belongs to the IspH family. Requires [4Fe-4S] cluster as cofactor.

The enzyme catalyses isopentenyl diphosphate + 2 oxidized [2Fe-2S]-[ferredoxin] + H2O = (2E)-4-hydroxy-3-methylbut-2-enyl diphosphate + 2 reduced [2Fe-2S]-[ferredoxin] + 2 H(+). The catalysed reaction is dimethylallyl diphosphate + 2 oxidized [2Fe-2S]-[ferredoxin] + H2O = (2E)-4-hydroxy-3-methylbut-2-enyl diphosphate + 2 reduced [2Fe-2S]-[ferredoxin] + 2 H(+). Its pathway is isoprenoid biosynthesis; dimethylallyl diphosphate biosynthesis; dimethylallyl diphosphate from (2E)-4-hydroxy-3-methylbutenyl diphosphate: step 1/1. The protein operates within isoprenoid biosynthesis; isopentenyl diphosphate biosynthesis via DXP pathway; isopentenyl diphosphate from 1-deoxy-D-xylulose 5-phosphate: step 6/6. Its function is as follows. Catalyzes the conversion of 1-hydroxy-2-methyl-2-(E)-butenyl 4-diphosphate (HMBPP) into a mixture of isopentenyl diphosphate (IPP) and dimethylallyl diphosphate (DMAPP). Acts in the terminal step of the DOXP/MEP pathway for isoprenoid precursor biosynthesis. In Cereibacter sphaeroides (strain ATCC 17029 / ATH 2.4.9) (Rhodobacter sphaeroides), this protein is 4-hydroxy-3-methylbut-2-enyl diphosphate reductase.